Here is a 3054-residue protein sequence, read N- to C-terminus: Genome polyprotein (3054 aa).

A Peptidase S30 domain is found at 163 to 304 (FLPATSLSNV…FAVCHSMTHY (142 aa)). Active-site for P1 proteinase activity residues include histidine 214, aspartate 223, and serine 256. The Involved in interaction with stylet and aphid transmission signature appears at 358–361 (KITC). An Involved in virions binding and aphid transmission motif is present at residues 615–617 (PTK). In terms of domain architecture, Peptidase C6 spans 641–763 (MYIANEGYCY…ESEMKTYNVG (123 aa)). Residues cysteine 649 and histidine 722 each act as for helper component proteinase activity in the active site. Positions 1234–1386 (EISHSPARDF…TQFPVKLKIE (153 aa)) constitute a Helicase ATP-binding domain. An ATP-binding site is contributed by 1247–1254 (GAVGSGKS). Residues 1336–1339 (DECH) carry the DECH box motif. Positions 1401–1564 (GANADVISCG…NLPVTTQSVS (164 aa)) constitute a Helicase C-terminal domain. The Nuclear localization signal motif lies at 1889–1896 (NKGKRKGT). Tyrosine 1911 bears the O-(5'-phospho-RNA)-tyrosine mark. Residues 2038–2255 (GESLFKGPRD…VLWGGHKVFM (218 aa)) form the Peptidase C4 domain. Catalysis depends on for nuclear inclusion protein A activity residues histidine 2083, aspartate 2118, and cysteine 2188. One can recognise a RdRp catalytic domain in the interval 2521–2641 (WVYCDADGSQ…AIHPDKAERL (121 aa)). The segment at 2798-2827 (GADAGKKKDQKDDKVAEQASKDRDVNAGTS) is disordered. Residues 2801–2822 (AGKKKDQKDDKVAEQASKDRDV) show a composition bias toward basic and acidic residues. Threonine 3038 is subject to Phosphothreonine.

It belongs to the potyviridae genome polyprotein family. As to quaternary structure, interacts with host eIF4E protein (via cap-binding region); this interaction mediates the translation of the VPg-viral RNA conjugates. Part of a complex that comprises VPg, RNA, host EIF4E and EIF4G; this interaction mediates the translation of the VPg-viral RNA conjugates. Interaction is possible in susceptible hosts but impaired in resistant plants: the VPg of strain HAT interacts with tomato eIF4E1 and eIF4E2 as well as with Capsicum annuum eIF4E1 susceptible alleles pvr2(+), pvr2(3) and pvr2(9) but not with the resistant allele pvr2(2), the VPg of strain CAA10 interacts with C.annuum eIF4E1 susceptible alleles pvr2(+), pvr2(2), pvr2(3) and pvr2(9), the VPg of strain NW interacts at least with C.annuum eIF4E1. Homodimer; disulfide-linked. In terms of processing, VPg is uridylylated by the polymerase and is covalently attached to the 5'-end of the genomic RNA. This uridylylated form acts as a nucleotide-peptide primer for the polymerase. Potyviral RNA is expressed as two polyproteins which undergo post-translational proteolytic processing. Genome polyprotein is processed by NIa-pro, P1 and HC-pro proteinases resulting in the production of at least ten individual proteins. P3N-PIPO polyprotein is cleaved by P1 and HC-pro proteinases resulting in the production of three individual proteins. The P1 proteinase and the HC-pro cleave only their respective C-termini autocatalytically. 6K1 is essential for proper proteolytic separation of P3 from CI.

Its subcellular location is the host cytoplasmic vesicle. It is found in the host nucleus. The protein resides in the virion. The catalysed reaction is RNA(n) + a ribonucleoside 5'-triphosphate = RNA(n+1) + diphosphate. It catalyses the reaction Hydrolyzes glutaminyl bonds, and activity is further restricted by preferences for the amino acids in P6 - P1' that vary with the species of potyvirus, e.g. Glu-Xaa-Xaa-Tyr-Xaa-Gln-|-(Ser or Gly) for the enzyme from tobacco etch virus. The natural substrate is the viral polyprotein, but other proteins and oligopeptides containing the appropriate consensus sequence are also cleaved.. It carries out the reaction Hydrolyzes a Gly-|-Gly bond at its own C-terminus, commonly in the sequence -Tyr-Xaa-Val-Gly-|-Gly, in the processing of the potyviral polyprotein.. In terms of biological role, required for aphid transmission and also has proteolytic activity. Only cleaves a Gly-Gly dipeptide at its own C-terminus. Interacts with virions and aphid stylets. Acts as a suppressor of RNA-mediated gene silencing, also known as post-transcriptional gene silencing (PTGS), a mechanism of plant viral defense that limits the accumulation of viral RNAs. May have RNA-binding activity. Its function is as follows. Has helicase activity. It may be involved in replication. Functionally, indispensable for virus replication. Reduces the abundance of host transcripts related to jasmonic acid biosynthesis therefore altering the host defenses. In order to increase its own stability, decreases host protein degradation pathways. Indispensable for virus replication. In terms of biological role, mediates the cap-independent, EIF4E-dependent translation of viral genomic RNAs. Binds to the cap-binding site of host EIF4E and thus interferes with the host EIF4E-dependent mRNA export and translation. VPg-RNA directly binds EIF4E and is a template for transcription. Also forms trimeric complexes with EIF4E-EIF4G, which are templates for translation. Its function is as follows. Has RNA-binding and proteolytic activities. Functionally, an RNA-dependent RNA polymerase that plays an essential role in the virus replication. Involved in aphid transmission, cell-to-cell and systemis movement, encapsidation of the viral RNA and in the regulation of viral RNA amplification. The sequence is that of Genome polyprotein from Capsicum annuum (Capsicum pepper).